The primary structure comprises 457 residues: Argininosuccinate lyase (457 aa).

It belongs to the lyase 1 family. Argininosuccinate lyase subfamily.

The protein resides in the cytoplasm. It carries out the reaction 2-(N(omega)-L-arginino)succinate = fumarate + L-arginine. It functions in the pathway amino-acid biosynthesis; L-arginine biosynthesis; L-arginine from L-ornithine and carbamoyl phosphate: step 3/3. The sequence is that of Argininosuccinate lyase from Escherichia coli O127:H6 (strain E2348/69 / EPEC).